The sequence spans 156 residues: Cytochrome c-type biogenesis protein CcmE 1 (156 aa).

The Cytoplasmic portion of the chain corresponds to 1–8; it reads MNATRRQR. Residues 9–29 form a helical; Signal-anchor for type II membrane protein membrane-spanning segment; the sequence is LWWVICVLTAAALAVTLIVFA. Residues 30-156 lie on the Periplasmic side of the membrane; sequence LQRNMSYLFT…ATATPLTAPR (127 aa). Positions 123 and 127 each coordinate heme. The segment at 137–156 is disordered; the sequence is AEGHAGKPIPATATPLTAPR. A compositionally biased stretch (low complexity) spans 146-156; it reads PATATPLTAPR.

Belongs to the CcmE/CycJ family.

Its subcellular location is the cell inner membrane. Heme chaperone required for the biogenesis of c-type cytochromes. Transiently binds heme delivered by CcmC and transfers the heme to apo-cytochromes in a process facilitated by CcmF and CcmH. The chain is Cytochrome c-type biogenesis protein CcmE 1 from Xanthomonas euvesicatoria pv. vesicatoria (strain 85-10) (Xanthomonas campestris pv. vesicatoria).